Here is a 272-residue protein sequence, read N- to C-terminus: Carbonic anhydrase (272 aa).

Zn(2+)-binding residues include Cys39, His98, and Cys101.

The protein belongs to the beta-class carbonic anhydrase family. As to quaternary structure, a hexamer formed by a trimer of dimers. Purified from carboxysomes with the both RuBisCO subunits and the full-length form of CcmM, probably interacts with the N-terminus of CcmM. Requires Zn(2+) as cofactor.

The protein localises to the carboxysome. It carries out the reaction hydrogencarbonate + H(+) = CO2 + H2O. In terms of biological role, reversible hydration of carbon dioxide. Essential to photosynthetic carbon dioxide fixation, supplies CO(2) to RuBisCO (ribulose bisphosphate carboxylase, rbcL-rbcS) in the carboxysome. Loss of activity results in limitation of CO(2) availability to RuBisCO located in the cytoplasm. This is Carbonic anhydrase from Synechococcus elongatus (strain ATCC 33912 / PCC 7942 / FACHB-805) (Anacystis nidulans R2).